A 162-amino-acid chain; its full sequence is Small ribosomal subunit protein uS7m (162 aa).

The protein belongs to the universal ribosomal protein uS7 family. As to quaternary structure, part of the small ribosomal subunit.

The protein resides in the mitochondrion. Functionally, one of the primary rRNA binding proteins, it binds directly to 16S-like rRNA where it nucleates assembly of the head domain of the small subunit. The protein is Small ribosomal subunit protein uS7m (mrps7) of Dictyostelium discoideum (Social amoeba).